The chain runs to 271 residues: Neurexophilin-1 (271 aa).

A signal peptide spans Met1–Cys21. Residues Ala22–Leu97 are II. Residues Asn23, Asn68, Asn93, Asn146, Asn156, and Asn162 are each glycosylated (N-linked (GlcNAc...) asparagine). The III stretch occupies residues Gln98 to Phe176. The tract at residues Asp177–Asp185 is IV (linker domain). Residues Ala186 to Gly271 are v (Cys-rich).

This sequence belongs to the neurexophilin family. May be proteolytically processed at the boundary between the N-terminal non-conserved and the central conserved domain in neuron-like cells. As to expression, brain, only in a scattered subpopulation of neurons that probably represent inhibitory interneurons.

It localises to the secreted. Functionally, may be signaling molecules that resemble neuropeptides. Ligand for alpha-neurexins. In Mus musculus (Mouse), this protein is Neurexophilin-1 (Nxph1).